The primary structure comprises 227 residues: Phosphoribosylformylglycinamidine synthase subunit PurQ (227 aa).

Positions 3–225 (FAVIVFPGSN…LRNWRESHVV (223 aa)) constitute a Glutamine amidotransferase type-1 domain. C86 functions as the Nucleophile in the catalytic mechanism. Active-site residues include H194 and E196.

In terms of assembly, part of the FGAM synthase complex composed of 1 PurL, 1 PurQ and 2 PurS subunits.

Its subcellular location is the cytoplasm. The enzyme catalyses N(2)-formyl-N(1)-(5-phospho-beta-D-ribosyl)glycinamide + L-glutamine + ATP + H2O = 2-formamido-N(1)-(5-O-phospho-beta-D-ribosyl)acetamidine + L-glutamate + ADP + phosphate + H(+). It carries out the reaction L-glutamine + H2O = L-glutamate + NH4(+). It functions in the pathway purine metabolism; IMP biosynthesis via de novo pathway; 5-amino-1-(5-phospho-D-ribosyl)imidazole from N(2)-formyl-N(1)-(5-phospho-D-ribosyl)glycinamide: step 1/2. Its function is as follows. Part of the phosphoribosylformylglycinamidine synthase complex involved in the purines biosynthetic pathway. Catalyzes the ATP-dependent conversion of formylglycinamide ribonucleotide (FGAR) and glutamine to yield formylglycinamidine ribonucleotide (FGAM) and glutamate. The FGAM synthase complex is composed of three subunits. PurQ produces an ammonia molecule by converting glutamine to glutamate. PurL transfers the ammonia molecule to FGAR to form FGAM in an ATP-dependent manner. PurS interacts with PurQ and PurL and is thought to assist in the transfer of the ammonia molecule from PurQ to PurL. The sequence is that of Phosphoribosylformylglycinamidine synthase subunit PurQ from Halalkalibacterium halodurans (strain ATCC BAA-125 / DSM 18197 / FERM 7344 / JCM 9153 / C-125) (Bacillus halodurans).